We begin with the raw amino-acid sequence, 212 residues long: Large ribosomal subunit protein uL3 (212 aa).

A compositionally biased stretch (basic residues) spans 128-146 (RHGASRGPMKHGSKYHRRT). Positions 128–164 (RHGASRGPMKHGSKYHRRTGSLGAKGPARVFKGRNLP) are disordered.

The protein belongs to the universal ribosomal protein uL3 family. As to quaternary structure, part of the 50S ribosomal subunit. Forms a cluster with proteins L14 and L19.

In terms of biological role, one of the primary rRNA binding proteins, it binds directly near the 3'-end of the 23S rRNA, where it nucleates assembly of the 50S subunit. This chain is Large ribosomal subunit protein uL3, found in Desulfitobacterium hafniense (strain Y51).